The following is an 89-amino-acid chain: Elongation factor 1-beta (89 aa).

The protein belongs to the EF-1-beta/EF-1-delta family.

Its function is as follows. Promotes the exchange of GDP for GTP in EF-1-alpha/GDP, thus allowing the regeneration of EF-1-alpha/GTP that could then be used to form the ternary complex EF-1-alpha/GTP/AAtRNA. This Methanococcus maripaludis (strain DSM 14266 / JCM 13030 / NBRC 101832 / S2 / LL) protein is Elongation factor 1-beta.